The chain runs to 313 residues: Ribosomal RNA small subunit methyltransferase H (313 aa).

Residues 37-39 (GGH), Asp57, Phe82, Asp104, and Gln111 each bind S-adenosyl-L-methionine.

The protein belongs to the methyltransferase superfamily. RsmH family.

The protein localises to the cytoplasm. The enzyme catalyses cytidine(1402) in 16S rRNA + S-adenosyl-L-methionine = N(4)-methylcytidine(1402) in 16S rRNA + S-adenosyl-L-homocysteine + H(+). In terms of biological role, specifically methylates the N4 position of cytidine in position 1402 (C1402) of 16S rRNA. In Alteromonas mediterranea (strain DSM 17117 / CIP 110805 / LMG 28347 / Deep ecotype), this protein is Ribosomal RNA small subunit methyltransferase H.